The sequence spans 133 residues: Holo-[acyl-carrier-protein] synthase (133 aa).

Positions 8 and 57 each coordinate Mg(2+).

The protein belongs to the P-Pant transferase superfamily. AcpS family. Mg(2+) serves as cofactor.

It is found in the cytoplasm. The enzyme catalyses apo-[ACP] + CoA = holo-[ACP] + adenosine 3',5'-bisphosphate + H(+). Its function is as follows. Transfers the 4'-phosphopantetheine moiety from coenzyme A to a Ser of acyl-carrier-protein. The sequence is that of Holo-[acyl-carrier-protein] synthase from Bartonella bacilliformis (strain ATCC 35685 / KC583 / Herrer 020/F12,63).